Consider the following 79-residue polypeptide: Apolipoprotein C-II (79 aa).

An N-terminal signal peptide occupies residues 1–21 (MDLKVVAVSFLLLVLCSEAAG). Positions 45 to 52 (GVEKLRDI) are lipid binding. A lipoprotein lipase cofactor region spans residues 56–79 (SVDAVGTYTSILTDQLYHWWCGEQ).

It belongs to the apolipoprotein C2 family. In terms of processing, proapolipoprotein C-II is synthesized as a sialic acid containing glycoprotein which is subsequently desialylated prior to its proteolytic processing. Post-translationally, proapolipoprotein C-II, the major form found in plasma undergoes proteolytic cleavage of its N-terminal hexapeptide to generate apolipoprotein C-II, which occurs as the minor form in plasma.

It localises to the secreted. Its function is as follows. Component of chylomicrons, very low-density lipoproteins (VLDL), low-density lipoproteins (LDL), and high-density lipoproteins (HDL) in plasma. Plays an important role in lipoprotein metabolism as an activator of lipoprotein lipase. Both proapolipoprotein C-II and apolipoprotein C-II can activate lipoprotein lipase. This chain is Apolipoprotein C-II (APOC2), found in Alligator mississippiensis (American alligator).